The primary structure comprises 408 residues: Imidazolonepropionase (408 aa).

Fe(3+) contacts are provided by H73 and H75. Residues H73 and H75 each contribute to the Zn(2+) site. Positions 82, 145, and 178 each coordinate 4-imidazolone-5-propanoate. Y145 lines the N-formimidoyl-L-glutamate pocket. H243 contributes to the Fe(3+) binding site. H243 contacts Zn(2+). Q246 serves as a coordination point for 4-imidazolone-5-propanoate. Fe(3+) is bound at residue D318. D318 is a Zn(2+) binding site. Positions 320 and 322 each coordinate N-formimidoyl-L-glutamate. S323 is a binding site for 4-imidazolone-5-propanoate.

It belongs to the metallo-dependent hydrolases superfamily. HutI family. It depends on Zn(2+) as a cofactor. Requires Fe(3+) as cofactor.

The protein resides in the cytoplasm. It carries out the reaction 4-imidazolone-5-propanoate + H2O = N-formimidoyl-L-glutamate. Its pathway is amino-acid degradation; L-histidine degradation into L-glutamate; N-formimidoyl-L-glutamate from L-histidine: step 3/3. Catalyzes the hydrolytic cleavage of the carbon-nitrogen bond in imidazolone-5-propanoate to yield N-formimidoyl-L-glutamate. It is the third step in the universal histidine degradation pathway. The sequence is that of Imidazolonepropionase from Shewanella sp. (strain W3-18-1).